A 1544-amino-acid polypeptide reads, in one-letter code: Rho guanine nucleotide exchange factor 12 (1544 aa).

Residues 1 to 62 form a disordered region; it reads MSGTQSTITD…KTKSSSEESR (62 aa). Ser-2 carries the post-translational modification N-acetylserine. Positions 28 to 45 are enriched in basic and acidic residues; that stretch reads SPTDKKQKVERIASHDFD. Ser-41 carries the phosphoserine modification. The PDZ domain maps to 72 to 151; that stretch reads CVIIQKDDNG…LTVQGRPPGS (80 aa). Positions 194–262 form a coiled coil; that stretch reads MGEENNVVHN…LSKATGSAQD (69 aa). Residues 247–346 form a disordered region; the sequence is PQLQEQLSKA…SLVGSPSTRI (100 aa). Composition is skewed to polar residues over residues 249–260 and 293–309; these read LQEQLSKATGSA and DCSS…NADS. At Ser-309 the chain carries Phosphoserine. Residues 313–329 are compositionally biased toward basic and acidic residues; that stretch reads GPKERIYLEENPEKSET. Residues 330–344 are compositionally biased toward polar residues; sequence IQDTDTQSLVGSPST. A Phosphoserine modification is found at Ser-341. In terms of domain architecture, RGSL spans 367-558; sequence GQCSCFQSIE…LMYMKHLGVK (192 aa). The interval 570-706 is disordered; the sequence is GRIGFLPKIK…GDTLDGTPRT (137 aa). Positions 582–592 are enriched in basic and acidic residues; it reads MKKDKEGEEKG. The span at 631–640 shows a compositional bias: polar residues; sequence STPSSVSPEP. At Ser-637 the chain carries Phosphoserine. A compositionally biased stretch (low complexity) spans 663 to 676; it reads ANSMSSVASGASFS. Thr-736 is modified (phosphothreonine). The DH domain occupies 787 to 977; the sequence is KRQEVINELF…RQILNYVNQA (191 aa). Positions 1019 to 1132 constitute a PH domain; sequence KMIHEGPLVW…WQDLICRMAA (114 aa). Residues 1138-1149 are compositionally biased toward polar residues; the sequence is STKPIPLPQSTP. The segment at 1138 to 1179 is disordered; it reads STKPIPLPQSTPGEGDNDEEDPSKLKEEQHGISVTGLQSPDR. A phosphoserine mark is found at Ser-1288, Ser-1327, Ser-1377, Ser-1457, and Ser-1541.

In terms of assembly, interacts with GNA12 and GNA13, probably through the RGS-like domain. Interacts with RHOA, PLXNB1 and PLXNB2. Interacts through its PDZ domain with IGF1R beta subunit. Interacts with GCSAM. Found in a complex with ARHGEF11 and ARHGEF12; binding to ARHGEF11 and ARHGEF12 enhances CDC42 GEF activity of PLEKHG4B, and PLEKHG4B, in turn, inhibits ARHGEF11- and ARHGEF12-mediated RHOA activation. As to expression, ubiquitously expressed. Isoform 2 is found in jejunum and testis.

The protein localises to the cytoplasm. It is found in the membrane. Its function is as follows. May play a role in the regulation of RhoA GTPase by guanine nucleotide-binding alpha-12 (GNA12) and alpha-13 (GNA13). Acts as guanine nucleotide exchange factor (GEF) for RhoA GTPase and may act as GTPase-activating protein (GAP) for GNA12 and GNA13. The protein is Rho guanine nucleotide exchange factor 12 (ARHGEF12) of Homo sapiens (Human).